Consider the following 332-residue polypeptide: HPr kinase/phosphorylase (332 aa).

Residues H153 and K174 contribute to the active site. 168 to 175 contacts ATP; it reads GKSGLGKS. Position 175 (S175) interacts with Mg(2+). The active-site Proton acceptor; for phosphorylation activity. Proton donor; for dephosphorylation activity is the D192. The tract at residues 217–226 is important for the catalytic mechanism of both phosphorylation and dephosphorylation; the sequence is MEIRGLGVVD. E218 contributes to the Mg(2+) binding site. Residue R259 is part of the active site. Residues 280-285 form an important for the catalytic mechanism of dephosphorylation region; that stretch reads PIFPGK.

Belongs to the HPrK/P family. Homohexamer. Requires Mg(2+) as cofactor.

The enzyme catalyses [HPr protein]-L-serine + ATP = [HPr protein]-O-phospho-L-serine + ADP + H(+). It carries out the reaction [HPr protein]-O-phospho-L-serine + phosphate + H(+) = [HPr protein]-L-serine + diphosphate. In terms of biological role, catalyzes the ATP- as well as the pyrophosphate-dependent phosphorylation of a specific serine residue in HPr, a phosphocarrier protein of the phosphoenolpyruvate-dependent sugar phosphotransferase system (PTS). HprK/P also catalyzes the pyrophosphate-producing, inorganic phosphate-dependent dephosphorylation (phosphorolysis) of seryl-phosphorylated HPr (P-Ser-HPr). In Chlorobium phaeovibrioides (strain DSM 265 / 1930) (Prosthecochloris vibrioformis (strain DSM 265)), this protein is HPr kinase/phosphorylase.